A 334-amino-acid polypeptide reads, in one-letter code: Geranylgeranyl pyrophosphate synthase idtG (334 aa).

Residues lysine 49, arginine 52, and histidine 81 each contribute to the isopentenyl diphosphate site. Mg(2+)-binding residues include aspartate 88 and aspartate 92. Arginine 97 provides a ligand contact to dimethylallyl diphosphate. Arginine 98 is a binding site for isopentenyl diphosphate. Dimethylallyl diphosphate contacts are provided by lysine 175, threonine 176, and glutamine 209. Residue aspartate 212 participates in Mg(2+) binding. 3 residues coordinate dimethylallyl diphosphate: asparagine 216, lysine 226, and lysine 236.

Belongs to the FPP/GGPP synthase family. The cofactor is Mg(2+).

It catalyses the reaction isopentenyl diphosphate + dimethylallyl diphosphate = (2E)-geranyl diphosphate + diphosphate. The enzyme catalyses isopentenyl diphosphate + (2E)-geranyl diphosphate = (2E,6E)-farnesyl diphosphate + diphosphate. It carries out the reaction isopentenyl diphosphate + (2E,6E)-farnesyl diphosphate = (2E,6E,10E)-geranylgeranyl diphosphate + diphosphate. It participates in secondary metabolite biosynthesis. Functionally, geranylgeranyl pyrophosphate synthase; part of the gene cluster that mediates the biosynthesis of paspalitrems, indole-diterpene (IDT) mycotoxins that are potent tremorgens in mammals. The geranylgeranyl diphosphate (GGPP) synthase idtG is proposed to catalyze the first step in IDT biosynthesis via catalysis of a series of iterative condensations of isopentenyl diphosphate (IPP) with dimethylallyl diphosphate (DMAPP), geranyl diphosphate (GPP), and farnesyl diphosphate (FPP), to form GGPP. Condensation of indole-3-glycerol phosphate with GGPP by the prenyltransferase idtC then forms 3-geranylgeranylindole (3-GGI). Epoxidation of the two terminal alkenes of the geranylgeranyl moiety by the FAD-dependent monooxygenase idtM, and cyclization by the terpene cyclase idtB then leads to the production of paspaline. The cytochrome P450 monooxygenase idtP then catalyzes oxidative elimination of the pendant methyl group at C-12 of paspaline and generates the C-10 ketone to yield 13-desoxypaxilline. The cytochrome P450 monooxygenase idtQ may catalyze the C-13 oxidation of 13-desoxypaxilline to afford paxilline. Considering that both paspalicine and paxilline were detected in C.paspali, idtQ also catalyzes the formation of paspalinine from 13-desoxypaxilline via paspalicine as an intermediate. Finally, the alpha-prenyltransferase idtF prenylates paspalinine at the C-20 or the C-21 positions to yield paspalitrems A and C, respectively. The hydroxylation of paspalitrem A at C-32 by a still unknown oxidase affords paspalitrem B. In Claviceps paspali (Rye ergot fungus), this protein is Geranylgeranyl pyrophosphate synthase idtG.